Reading from the N-terminus, the 308-residue chain is Palmitoyltransferase ZDHHC7 (308 aa).

Residues Met-1–Cys-50 lie on the Cytoplasmic side of the membrane. A helical membrane pass occupies residues Ala-51–Leu-71. Residues Pro-72–Asp-75 are Lumenal-facing. A helical transmembrane segment spans residues Phe-76 to Ser-96. Residues His-97–Arg-173 lie on the Cytoplasmic side of the membrane. The 51-residue stretch at Tyr-130–Met-180 folds into the DHHC domain. The active-site S-palmitoyl cysteine intermediate is Cys-160. The chain crosses the membrane as a helical span at residues Phe-174–Gly-194. The Lumenal portion of the chain corresponds to Leu-195–Val-217. A helical membrane pass occupies residues Ile-218–Phe-238. Over Gly-239–Val-308 the chain is Cytoplasmic.

It belongs to the DHHC palmitoyltransferase family. As to quaternary structure, homooligomers. Heterooligomers with ZDHHC3. Autopalmitoylated. In terms of tissue distribution, ubiquitously expressed, with highest levels in liver, kidney and brain. Expressed in all brain regions.

It localises to the golgi apparatus membrane. The enzyme catalyses L-cysteinyl-[protein] + hexadecanoyl-CoA = S-hexadecanoyl-L-cysteinyl-[protein] + CoA. It carries out the reaction L-cysteinyl-[protein] + tetradecanoyl-CoA = S-tetradecanoyl-L-cysteinyl-[protein] + CoA. The catalysed reaction is L-cysteinyl-[protein] + octadecanoyl-CoA = S-octadecanoyl-L-cysteinyl-[protein] + CoA. Functionally, golgi-localized palmitoyltransferase that catalyzes the addition of palmitate onto various protein substrates and therefore functions in several unrelated biological processes. Has no stringent fatty acid selectivity and in addition to palmitate can also transfer onto target proteins myristate from tetradecanoyl-CoA and stearate from octadecanoyl-CoA. Palmitoylates sex steroid hormone receptors, including ESR1, PGR and AR, thereby regulating their targeting to the plasma membrane and their function in rapid intracellular signaling upon binding of sex hormones. Palmitoylates GNAQ, a heterotrimeric G protein, regulating its dynamic localization at the plasma membrane and is thereby involved in GNAQ-dependent G protein-coupled receptor signaling pathways. Also functions in ligand-induced cell death by regulating the FAS signaling pathway through the palmitoylation and stabilization of the receptor at the plasma membrane. In epithelial cells, palmitoylates SCRIB and regulates its localization to the plasma membrane, regulating indirectly cell polarity and differentiation. Also palmitoylates JAM3 and promotes its expression at tight junctions and regulates its function in cell migration. Palmitoylates the glucose transporter GLUT4/SLC2A4 and controls the insulin-dependent translocation of GLUT4 to the plasma membrane. In brain, could also palmitoylate SNAP25 and DLG4/PSD95. Could also palmitoylate DNAJC5 and regulate its localization to the Golgi membrane. Could also palmitoylate NCDN. May play a role in follicle stimulation hormone (FSH) activation of testicular Sertoli cells. Activates pyroptosis by catalyzing palmitoylation of gasdermin-D (GSDMD). In Mus musculus (Mouse), this protein is Palmitoyltransferase ZDHHC7.